The following is a 784-amino-acid chain: ATP-dependent 6-phosphofructokinase, platelet type (784 aa).

M1 carries the post-translational modification N-acetylmethionine. Residues 1–398 (MSDLDSSSSS…NLNTYKRLAI (398 aa)) form an N-terminal catalytic PFK domain 1 region. Residues S2, S6, and S20 each carry the phosphoserine modification. ATP-binding positions include G33, 96 to 97 (RC), and 126 to 129 (GDGS). D127 provides a ligand contact to Mg(2+). Position 141 is a phosphoserine (S141). Substrate contacts are provided by residues 172 to 174 (SID), R209, 216 to 218 (MGR), E272, R300, and 306 to 309 (HVQR). Residue D174 is the Proton acceptor of the active site. K394 is subject to N6-acetyllysine. The segment at 399 to 410 (KLPDEKIVKSNC) is interdomain linker. Residues 411-784 (NVAVINVGAP…LESLQHHEEL (374 aa)) are C-terminal regulatory PFK domain 2. R480 is a binding site for beta-D-fructose 2,6-bisphosphate. K485 carries the post-translational modification N6-acetyllysine. Beta-D-fructose 2,6-bisphosphate contacts are provided by residues 537 to 541 (TVSNN), R575, 582 to 584 (MGG), and E638. S539 carries an O-linked (GlcNAc) serine glycan. Y650 carries the phosphotyrosine modification. Beta-D-fructose 2,6-bisphosphate contacts are provided by residues R664 and 670-673 (HMQQ). K687 carries the post-translational modification N6-acetyllysine. R743 is a binding site for beta-D-fructose 2,6-bisphosphate.

It belongs to the phosphofructokinase type A (PFKA) family. ATP-dependent PFK group I subfamily. Eukaryotic two domain clade 'E' sub-subfamily. As to quaternary structure, homo- and heterotetramers. Phosphofructokinase (PFK) enzyme functions as a tetramer composed of different combinations of 3 types of subunits, called PFKM (M), PFKL (L) and PFKP (P). The composition of the PFK tetramer differs according to the tissue type it is present in. The kinetic and regulatory properties of the tetrameric enzyme are dependent on the subunit composition, hence can vary across tissues. Interacts with ATG4B; promoting phosphorylation of ATG4B. The cofactor is Mg(2+). In terms of processing, glcNAcylation decreases enzyme activity. As to expression, expression is constant during tumor growth and markedly decreases when cell proliferation stops.

It is found in the cytoplasm. The catalysed reaction is beta-D-fructose 6-phosphate + ATP = beta-D-fructose 1,6-bisphosphate + ADP + H(+). The protein operates within carbohydrate degradation; glycolysis; D-glyceraldehyde 3-phosphate and glycerone phosphate from D-glucose: step 3/4. With respect to regulation, allosterically activated by ADP, AMP, or fructose 2,6-bisphosphate, and allosterically inhibited by ATP or citrate. In terms of biological role, catalyzes the phosphorylation of D-fructose 6-phosphate to fructose 1,6-bisphosphate by ATP, the first committing step of glycolysis. This is ATP-dependent 6-phosphofructokinase, platelet type (Pfkp) from Mus musculus (Mouse).